The following is a 525-amino-acid chain: Probable histidine ammonia-lyase (525 aa).

Positions 145–147 (ASG) form a cross-link, 5-imidazolinone (Ala-Gly). S146 bears the 2,3-didehydroalanine (Ser) mark.

The protein belongs to the PAL/histidase family. In terms of processing, contains an active site 4-methylidene-imidazol-5-one (MIO), which is formed autocatalytically by cyclization and dehydration of residues Ala-Ser-Gly.

It localises to the cytoplasm. The enzyme catalyses L-histidine = trans-urocanate + NH4(+). Its pathway is amino-acid degradation; L-histidine degradation into L-glutamate; N-formimidoyl-L-glutamate from L-histidine: step 1/3. This Halobacterium salinarum (strain ATCC 29341 / DSM 671 / R1) protein is Probable histidine ammonia-lyase.